We begin with the raw amino-acid sequence, 465 residues long: tRNA modification GTPase MnmE (465 aa).

Residues R21, E85, and K124 each contribute to the (6S)-5-formyl-5,6,7,8-tetrahydrofolate site. The 168-residue stretch at 220–387 (GVPVAIIGET…LQKMLINAAH (168 aa)) folds into the TrmE-type G domain. A K(+)-binding site is contributed by N230. Residues 230–235 (NAGKST), 249–255 (SDIHGTT), 274–277 (DTAG), and 337–340 (NKAD) each bind GTP. Mg(2+) is bound at residue S234. K(+) contacts are provided by S249, I251, and T254. Mg(2+) is bound at residue T255. K465 serves as a coordination point for (6S)-5-formyl-5,6,7,8-tetrahydrofolate.

It belongs to the TRAFAC class TrmE-Era-EngA-EngB-Septin-like GTPase superfamily. TrmE GTPase family. As to quaternary structure, homodimer. Heterotetramer of two MnmE and two MnmG subunits. K(+) is required as a cofactor.

The protein localises to the cytoplasm. In terms of biological role, exhibits a very high intrinsic GTPase hydrolysis rate. Involved in the addition of a carboxymethylaminomethyl (cmnm) group at the wobble position (U34) of certain tRNAs, forming tRNA-cmnm(5)s(2)U34. The chain is tRNA modification GTPase MnmE from Bacteroides thetaiotaomicron (strain ATCC 29148 / DSM 2079 / JCM 5827 / CCUG 10774 / NCTC 10582 / VPI-5482 / E50).